The chain runs to 604 residues: Matrix metalloproteinase-21 (604 aa).

The signal sequence occupies residues 1 to 22; the sequence is MPSIKLLVWCCLCVISPRLCHS. A propeptide spanning residues 23-180 is cleaved from the precursor; that stretch reads EKLFHSRDRS…PDPPKIRRKR (158 aa). The tract at residues 132–175 is disordered; that stretch reads KPRCGVPDNQMAKKETEKPTAAQSLENKTKDSENVTQQNPDPPK. The short motif at 133 to 140 is the Cysteine switch element; that stretch reads PRCGVPDN. Cysteine 135 is a Zn(2+) binding site. Asparagine 158 and asparagine 165 each carry an N-linked (GlcNAc...) asparagine glycan. Zn(2+) is bound at residue histidine 318. Glutamate 319 is an active-site residue. The Zn(2+) site is built by histidine 322 and histidine 328. The cysteines at positions 364 and 595 are disulfide-linked. Hemopexin repeat units lie at residues 365-424, 426-482, 483-531, and 538-594; these read EGPF…WHGI, VQNI…FPGI, PSPI…FPAV, and KGNI…WFDI. N-linked (GlcNAc...) asparagine glycosylation is found at asparagine 404 and asparagine 407.

The protein belongs to the peptidase M10A family. The cofactor is Zn(2+). Ca(2+) serves as cofactor. Post-translationally, the precursor is cleaved by a furin endopeptidase.

The protein resides in the secreted. Plays a specialized role in the generation of left-right asymmetry during embryogenesis. May act as a negative regulator of the NOTCH-signaling pathway. The sequence is that of Matrix metalloproteinase-21 (mmp21) from Xenopus laevis (African clawed frog).